The following is a 352-amino-acid chain: Rhodopsin (352 aa).

Topologically, residues Met-1–Ala-36 are extracellular. 2 N-linked (GlcNAc...) asparagine glycosylation sites follow: Asn-2 and Asn-15. A helical membrane pass occupies residues Tyr-37–Val-61. At Thr-62 to Asn-73 the chain is on the cytoplasmic side. A helical transmembrane segment spans residues Tyr-74–Tyr-96. Topologically, residues Thr-97–Cys-110 are extracellular. Residues Cys-110 and Cys-187 are joined by a disulfide bond. The chain crosses the membrane as a helical span at residues Asn-111 to Ile-133. The 'Ionic lock' involved in activated form stabilization signature appears at Glu-134–Trp-136. Residues Glu-134–His-152 lie on the Cytoplasmic side of the membrane. A helical transmembrane segment spans residues Ala-153–Val-173. At Gly-174–Ser-202 the chain is on the extracellular side. A helical transmembrane segment spans residues Phe-203 to Gly-224. At Arg-225–Arg-252 the chain is on the cytoplasmic side. Residues Met-253 to Trp-274 form a helical membrane-spanning segment. The Extracellular portion of the chain corresponds to Ile-275–Ile-286. A helical transmembrane segment spans residues Phe-287–Cys-308. N6-(retinylidene)lysine is present on Lys-296. Over Leu-309–Ala-352 the chain is Cytoplasmic. 2 S-palmitoyl cysteine lipidation sites follow: Cys-322 and Cys-323. The tract at residues Glu-331–Ala-352 is disordered. A compositionally biased stretch (low complexity) spans Ala-334–Ala-352.

Belongs to the G-protein coupled receptor 1 family. Opsin subfamily. Post-translationally, phosphorylated on some or all of the serine and threonine residues present in the C-terminal region. Contains one covalently linked retinal chromophore.

Its subcellular location is the membrane. It is found in the cell projection. The protein resides in the cilium. It localises to the photoreceptor outer segment. Functionally, photoreceptor required for image-forming vision at low light intensity. While most salt water fish species use retinal as chromophore, most freshwater fish use 3-dehydroretinal, or a mixture of retinal and 3-dehydroretinal. Light-induced isomerization of 11-cis to all-trans retinal triggers a conformational change that activates signaling via G-proteins. Subsequent receptor phosphorylation mediates displacement of the bound G-protein alpha subunit by arrestin and terminates signaling. This Psalidodon fasciatus (Banded astyanax) protein is Rhodopsin (rho).